The chain runs to 512 residues: ATP synthase subunit alpha, chloroplastic (512 aa).

170–177 (GDRQTGKT) serves as a coordination point for ATP.

The protein belongs to the ATPase alpha/beta chains family. F-type ATPases have 2 components, CF(1) - the catalytic core - and CF(0) - the membrane proton channel. CF(1) has five subunits: alpha(3), beta(3), gamma(1), delta(1), epsilon(1). CF(0) has four main subunits: a, b, b' and c.

The protein resides in the plastid. Its subcellular location is the chloroplast thylakoid membrane. The enzyme catalyses ATP + H2O + 4 H(+)(in) = ADP + phosphate + 5 H(+)(out). Functionally, produces ATP from ADP in the presence of a proton gradient across the membrane. The alpha chain is a regulatory subunit. This chain is ATP synthase subunit alpha, chloroplastic, found in Chaetosphaeridium globosum (Charophycean green alga).